We begin with the raw amino-acid sequence, 1639 residues long: Protein GFS12 (1639 aa).

Residues 206-294 (LEEKSKLRCL…IRPSNILLSD (89 aa)) form the Protein kinase 1 domain. Positions 336 to 608 (LKISSHLDWQ…FHGFGVDNKR (273 aa)) constitute a BEACH domain. Residues 715 to 788 (IAGDIFSIGC…AKSLLDSPYF (74 aa)) form the Protein kinase 2 domain. 2 WD repeats span residues 1290–1333 (AHHG…CVSS) and 1336–1373 (AHEE…LISL). Low complexity predominate over residues 1377–1398 (SPSDQDQASSDPSSKNNSNPCN). A disordered region spans residues 1377–1399 (SPSDQDQASSDPSSKNNSNPCNR). WD repeat units lie at residues 1465-1499 (ALCS…RLFD), 1511-1549 (AHDG…TPQP), and 1609-1639 (RVKS…RICC).

Belongs to the protein kinase superfamily. Tyr protein kinase family. In terms of assembly, interacts (via protein kinase 2 domain) with BCHC1 (via PH-BEACH domain). Weakly expressed in the cotyledons of germinating seedlings. Restricted to the vascular tissues of cotyledons. Detected in root tips, apical meristem, young flower buds and receptacles.

In terms of biological role, may act predominantly to suppress BCHC1, which itself is a negative factor in protein storage vacuole (PSV) trafficking regulation and plant effector triggered immunity (ETI). Required for ETI, but not for cell death. The chain is Protein GFS12 from Arabidopsis thaliana (Mouse-ear cress).